The following is a 153-amino-acid chain: NAD(P)H-quinone oxidoreductase subunit N (153 aa).

This sequence belongs to the complex I NdhN subunit family. As to quaternary structure, NDH-1 can be composed of about 15 different subunits; different subcomplexes with different compositions have been identified which probably have different functions.

It is found in the cellular thylakoid membrane. The catalysed reaction is a plastoquinone + NADH + (n+1) H(+)(in) = a plastoquinol + NAD(+) + n H(+)(out). The enzyme catalyses a plastoquinone + NADPH + (n+1) H(+)(in) = a plastoquinol + NADP(+) + n H(+)(out). Its function is as follows. NDH-1 shuttles electrons from an unknown electron donor, via FMN and iron-sulfur (Fe-S) centers, to quinones in the respiratory and/or the photosynthetic chain. The immediate electron acceptor for the enzyme in this species is believed to be plastoquinone. Couples the redox reaction to proton translocation, and thus conserves the redox energy in a proton gradient. Cyanobacterial NDH-1 also plays a role in inorganic carbon-concentration. The polypeptide is NAD(P)H-quinone oxidoreductase subunit N (Synechococcus sp. (strain WH7803)).